The chain runs to 181 residues: CAPA peptides (181 aa).

Residues 1 to 22 (MQDNRFFILMILLVFSTSLNQG) form the signal peptide. A propeptide spanning residues 23 to 29 (QKLKAND) is cleaved from the precursor. Ile41 carries the post-translational modification Isoleucine amide. The propeptide occupies 44–54 (NSEISSFSRSE). At Ile65 the chain carries Isoleucine amide. Positions 68–181 (SDVSSFDNLN…ENERDTANFL (114 aa)) are excised as a propeptide. The interval 159–181 (TQGQGGYTPRLGRENERDTANFL) is disordered. The span at 169–181 (LGRENERDTANFL) shows a compositional bias: basic and acidic residues.

Post-translationally, a pyrokinin potentially constituted by residues Asn-158 to Gly-170 has so far not been detected and might be completely absent in ants. In terms of tissue distribution, periviscerokinin 1 and 2 are expressed in central brain, antennal lobes and gnathal, thoracic and abominal ganglia. Periviscerokinin 2 is also expressed in the retrocerebral complex (at protein level).

It is found in the secreted. Functionally, periviscerokinins mediate visceral muscle contractile activity (myotropic activity). The polypeptide is CAPA peptides (Camponotus floridanus (Florida carpenter ant)).